Here is an 883-residue protein sequence, read N- to C-terminus: MNEQYSALRSNVSMLGKVLGETIKDALGEHILDRVETIRKLSKSSRAGNEANRQELLTTLQNLSNDELLPVARAFSQFLNLANTAEQYHSISPKGEAASNPEVIARTLRKLKNQPDLNDATIKKAVESLSLELVLTAHPTEITRRTLIHKMGEINNCLKQLDNTDIADYERHQVMRRLRQLIAQSWHTDEIRKQRPSPVDEAKWGFAVVENSLWQGVPNYLRELNEQLEENLGYKLTVDFVPVRFTSWMGGDRDGNPNVTADITRHVLLLSRWKATDLFLKDIHILVSELSMVDATPELLALVGEEGASEPYRYLMKKLRARLMATQSWLEARLKGEKLPKPAGLLTQNEQLWEPLYACYQSLQACGMGIIANGELLDTLRRVKCFGVPLVRIDIRQESTRHTEALGEITRYLGIGDYESWSEADKQAFLIRELNSKRPLLPRNWEPSNDTREVLETCKVIAEAPKGSIAAYVISMAKTPSDVLAVHLLLKEAGIGFAMPVAPLFETLDDLNNADDVMTQLLNIDWYRGLIQGKQMVMIGYSDSAKDAGVMAASWAQYQAQDALIKTCEKAGIELTLFHGRGGSIGRGGAPAHAALLSQPPGSLKGGLRVTEQGEMIRFKYGLPEVTVSSLSLYTSAILEANLLPPPEPKDSWRHIMDELSVISCETYRGYVRENKDFVPYFRSATPEQELGKLPLGSRPAKRRPTGGVESLRAIPWIFAWTQNRLMLPAWLGAGTALQKVVEDGKQSELEAMCRDWPFFSTRLGMLEMVFSKADLWLADYYDQRLVAKTLWPLGKELRDLLEEDIKVVLAIANDSHLMADLPWIAESIQLRNVYTDPLNVLQAELLYRSRLTEEQGKSPDPRVEQALMVTIAGVAAGMRNTG.

Residues His138 and Lys546 contribute to the active site.

Belongs to the PEPCase type 1 family. Requires Mg(2+) as cofactor.

It carries out the reaction oxaloacetate + phosphate = phosphoenolpyruvate + hydrogencarbonate. Forms oxaloacetate, a four-carbon dicarboxylic acid source for the tricarboxylic acid cycle. In Salmonella gallinarum (strain 287/91 / NCTC 13346), this protein is Phosphoenolpyruvate carboxylase.